The primary structure comprises 250 residues: NADH-quinone oxidoreductase subunit C (250 aa).

This sequence belongs to the complex I 30 kDa subunit family. As to quaternary structure, NDH-1 is composed of 14 different subunits. Subunits NuoB, C, D, E, F, and G constitute the peripheral sector of the complex.

It is found in the cell inner membrane. It carries out the reaction a quinone + NADH + 5 H(+)(in) = a quinol + NAD(+) + 4 H(+)(out). Functionally, NDH-1 shuttles electrons from NADH, via FMN and iron-sulfur (Fe-S) centers, to quinones in the respiratory chain. The immediate electron acceptor for the enzyme in this species is believed to be ubiquinone. Couples the redox reaction to proton translocation (for every two electrons transferred, four hydrogen ions are translocated across the cytoplasmic membrane), and thus conserves the redox energy in a proton gradient. This Xanthomonas oryzae pv. oryzae (strain PXO99A) protein is NADH-quinone oxidoreductase subunit C.